The sequence spans 140 residues: Protein SamA (140 aa).

Residues S61 and K98 each act as for autocatalytic cleavage activity in the active site.

Belongs to the peptidase S24 family.

In terms of biological role, involved in UV protection and mutation. The sequence is that of Protein SamA (samA) from Salmonella typhimurium (strain LT2 / SGSC1412 / ATCC 700720).